The chain runs to 150 residues: MIP18 family protein FAM96A (150 aa).

Belongs to the MIP18 family.

Its function is as follows. May play a role in chromosome segregation through establishment of sister chromatid cohesion. The sequence is that of MIP18 family protein FAM96A (fam96A) from Dictyostelium discoideum (Social amoeba).